The following is a 1116-amino-acid chain: Eukaryotic translation initiation factor 2-alpha kinase 3 (1116 aa).

The signal sequence occupies residues 1-29; sequence MERAISPGLLVRALLLLLLLLGLAARTVA. Residues 30 to 514 are Lumenal-facing; the sequence is AGRARGLPAP…HYNKNIRKKD (485 aa). A disordered region spans residues 77 to 101; that stretch reads ALPAAAGEQEPRGPEPDDETELRPR. N-linked (GlcNAc...) asparagine glycosylation is present at N258. The chain crosses the membrane as a helical span at residues 515 to 535; it reads PVLLLHWWKEIVATILFCIIA. Over 536–1116 the chain is Cytoplasmic; it reads TTFIVRRLFH…NNSHSPLPSN (581 aa). Residues 550 to 571 form a disordered region; the sequence is RQRKESETQCQTENKYDSVSGE. Residues 593–1077 form the Protein kinase domain; sequence FEPIQCLGRG…AINIIENAVF (485 aa). Position 599 to 607 (599 to 607) interacts with ATP; that stretch reads LGRGGFGVV. Phosphotyrosine; by autocatalysis is present on Y619. Residue K622 participates in ATP binding. The segment at 647–888 is insert loop; it reads EHPGIVRYFN…SPKVYLYIQM (242 aa). Position 715 is a phosphoserine (S715). Position 802 is a phosphothreonine (T802). Residues 841–863 form a disordered region; that stretch reads KPTSSKSSSEATLSISPPRPTTL. Residues 844–856 show a composition bias toward low complexity; that stretch reads SSKSSSEATLSIS. Residue D937 is the Proton acceptor of the active site. At T982 the chain carries Phosphothreonine. The disordered stretch occupies residues 1090-1116; the sequence is QRSRSLSSSGTKHSRQSNNSHSPLPSN. S1094 carries the phosphoserine modification. Over residues 1105 to 1116 the composition is skewed to polar residues; sequence QSNNSHSPLPSN.

This sequence belongs to the protein kinase superfamily. Ser/Thr protein kinase family. GCN2 subfamily. In terms of assembly, forms dimers with HSPA5/BIP in resting cells. Homotetramerizes in response to endoplasmic reticulum (ER) stress, leading to its activation. Interacts with HSP90B1/GRP94. Interacts with DNAJC3; inhibiting EIF2AK3/PERK activity. Interacts with ATAD3A; ATAD3A and EIF2S1/eIF-2-alpha occupy a common binding site within the cytoplasmic loop of EIF2AK3/PERK, leading to prevent EIF2AK3/PERK association with its substrate EIF2S1/eIF-2-alpha. Interacts with MFN2. Interacts with TMEM33. Interacts with PDIA6. Interacts with LACC1. Post-translationally, oligomerization of the N-terminal ER luminal domain by ER stress promotes EIF2AK3/PERK trans-autophosphorylation of the C-terminal cytoplasmic kinase domain at multiple residues including Thr-982 on the kinase activation loop. Autophosphorylated at Tyr-619 following endoplasmic reticulum stress, leading to activate its activity. Dephosphorylated at Tyr-619 by PTPN1/PTP1B, leading to inactivate its enzyme activity. Phosphorylation at Thr-802 by AKT (AKT1, AKT2 and/or AKT3) inactivates EIF2AK3/PERK. ADP-ribosylated by PARP16 upon ER stress, which increases kinase activity. Ubiquitous. A high level expression is seen in secretory tissues.

The protein resides in the endoplasmic reticulum membrane. It carries out the reaction L-seryl-[protein] + ATP = O-phospho-L-seryl-[protein] + ADP + H(+). It catalyses the reaction L-threonyl-[protein] + ATP = O-phospho-L-threonyl-[protein] + ADP + H(+). The enzyme catalyses L-tyrosyl-[protein] + ATP = O-phospho-L-tyrosyl-[protein] + ADP + H(+). Its activity is regulated as follows. Inhibited by HSPA5/BIP in absence of stress. Perturbation in protein folding in the endoplasmic reticulum (ER) promotes reversible dissociation from HSPA5/BIP and oligomerization, resulting in trans-autophosphorylation and kinase activity induction. Inactivated following phosphorylation at Thr-802 by AKT (AKT1, AKT2 and/or AKT3). Inhibited by ATAD3A at mitochondria-endoplasmic reticulum contact sites, providing a safe haven for mitochondrial protein translation during ER stress. Functionally, metabolic-stress sensing protein kinase that phosphorylates the alpha subunit of eukaryotic translation initiation factor 2 (EIF2S1/eIF-2-alpha) in response to various stress, such as unfolded protein response (UPR). Key effector of the integrated stress response (ISR) to unfolded proteins: EIF2AK3/PERK specifically recognizes and binds misfolded proteins, leading to its activation and EIF2S1/eIF-2-alpha phosphorylation. EIF2S1/eIF-2-alpha phosphorylation in response to stress converts EIF2S1/eIF-2-alpha in a global protein synthesis inhibitor, leading to a global attenuation of cap-dependent translation, while concomitantly initiating the preferential translation of ISR-specific mRNAs, such as the transcriptional activators ATF4 and QRICH1, and hence allowing ATF4- and QRICH1-mediated reprogramming. The EIF2AK3/PERK-mediated unfolded protein response increases mitochondrial oxidative phosphorylation by promoting ATF4-mediated expression of COX7A2L/SCAF1, thereby increasing formation of respiratory chain supercomplexes. In contrast to most subcellular compartments, mitochondria are protected from the EIF2AK3/PERK-mediated unfolded protein response due to EIF2AK3/PERK inhibition by ATAD3A at mitochondria-endoplasmic reticulum contact sites. In addition to EIF2S1/eIF-2-alpha, also phosphorylates NFE2L2/NRF2 in response to stress, promoting release of NFE2L2/NRF2 from the BCR(KEAP1) complex, leading to nuclear accumulation and activation of NFE2L2/NRF2. Serves as a critical effector of unfolded protein response (UPR)-induced G1 growth arrest due to the loss of cyclin-D1 (CCND1). Involved in control of mitochondrial morphology and function. The sequence is that of Eukaryotic translation initiation factor 2-alpha kinase 3 from Homo sapiens (Human).